The chain runs to 467 residues: MSLPSPPVLKTTIIQLNKELDPEDDNNNYEILTNDYNNYGSSNTSDAGSIPTSPIIEVSGTTKSGSGLPNKKKRRRSTANIDSEELAKRKNETKQLHSIIEKRRRIKINREFEALKYLIPACRNCNTGSSGGSATPTSSTKKASTNSNNNGNKIDGMYKLTILKSSVEYILYLHHIIQKQHQLLSSISAKDTNGGILAEKLKAFEDFDIDFAKVPLNVNQYRNIDKDFNFKDLMQDLDGRSVNTESPETIIEENEPVSETSSTNNTTTLHYSNSSVLPSRTSSIVSSRQSSSLPTPELTPILSILNKYSTSNNQLNNRKNSNPISPQTVCIKSQNPSPFTMPMKSSLSTSIVNSPSSSSSLSGSKSYMAGNNAVNTVKFSLPDPVVNPNSTLNDNIPRKGLISGIPEEEEEEKINKGSANTETVNSGSASSDENNDNDRGVLLKLTDQDVSKTLLALRKSSIDSLLN.

The span at 43–52 (NTSDAGSIPT) shows a compositional bias: polar residues. Disordered stretches follow at residues 43–83 (NTSD…NIDS), 128–149 (GSSG…NSNN), 245–275 (ESPE…SNSS), 312–365 (NNQL…SGSK), and 390–439 (STLN…DNDR). In terms of domain architecture, bHLH spans 92-173 (ETKQLHSIIE…KSSVEYILYL (82 aa)). Composition is skewed to low complexity over residues 257-275 (VSET…SNSS) and 312-322 (NNQLNNRKNSN). Polar residues predominate over residues 323–338 (PISPQTVCIKSQNPSP). Residues 345 to 365 (SSLSTSIVNSPSSSSSLSGSK) show a composition bias toward low complexity. A compositionally biased stretch (polar residues) spans 417–432 (GSANTETVNSGSASSD).

The protein resides in the nucleus. In terms of biological role, transcription factor required for yeast cell adherence to silicone substrate. The polypeptide is Transcriptional regulator of yeast form adherence 6 (TRY6) (Candida albicans (strain SC5314 / ATCC MYA-2876) (Yeast)).